A 227-amino-acid polypeptide reads, in one-letter code: Cytochrome c oxidase subunit 2 (227 aa).

Topologically, residues 1-14 (MAYPVQLGFQDAAS) are mitochondrial intermembrane. A helical transmembrane segment spans residues 15–45 (PIMEELLYFHDHTLMIVFLISSLVLYIISLM). The Mitochondrial matrix portion of the chain corresponds to 46–59 (LTTKLMHTSTMDAQ). The chain crosses the membrane as a helical span at residues 60 to 87 (EVETVWTILPAIILILIALPSLRILYMM). The Mitochondrial intermembrane segment spans residues 88–227 (DEITTPSLTL…HFEEWLLSMF (140 aa)). Cu cation is bound by residues H161, C196, E198, C200, H204, and M207. Residue E198 coordinates Mg(2+).

Belongs to the cytochrome c oxidase subunit 2 family. Component of the cytochrome c oxidase (complex IV, CIV), a multisubunit enzyme composed of 14 subunits. The complex is composed of a catalytic core of 3 subunits MT-CO1, MT-CO2 and MT-CO3, encoded in the mitochondrial DNA, and 11 supernumerary subunits COX4I, COX5A, COX5B, COX6A, COX6B, COX6C, COX7A, COX7B, COX7C, COX8 and NDUFA4, which are encoded in the nuclear genome. The complex exists as a monomer or a dimer and forms supercomplexes (SCs) in the inner mitochondrial membrane with NADH-ubiquinone oxidoreductase (complex I, CI) and ubiquinol-cytochrome c oxidoreductase (cytochrome b-c1 complex, complex III, CIII), resulting in different assemblies (supercomplex SCI(1)III(2)IV(1) and megacomplex MCI(2)III(2)IV(2)). Found in a complex with TMEM177, COA6, COX18, COX20, SCO1 and SCO2. Interacts with TMEM177 in a COX20-dependent manner. Interacts with COX20. Interacts with COX16. The cofactor is Cu cation.

The protein resides in the mitochondrion inner membrane. The enzyme catalyses 4 Fe(II)-[cytochrome c] + O2 + 8 H(+)(in) = 4 Fe(III)-[cytochrome c] + 2 H2O + 4 H(+)(out). In terms of biological role, component of the cytochrome c oxidase, the last enzyme in the mitochondrial electron transport chain which drives oxidative phosphorylation. The respiratory chain contains 3 multisubunit complexes succinate dehydrogenase (complex II, CII), ubiquinol-cytochrome c oxidoreductase (cytochrome b-c1 complex, complex III, CIII) and cytochrome c oxidase (complex IV, CIV), that cooperate to transfer electrons derived from NADH and succinate to molecular oxygen, creating an electrochemical gradient over the inner membrane that drives transmembrane transport and the ATP synthase. Cytochrome c oxidase is the component of the respiratory chain that catalyzes the reduction of oxygen to water. Electrons originating from reduced cytochrome c in the intermembrane space (IMS) are transferred via the dinuclear copper A center (CU(A)) of subunit 2 and heme A of subunit 1 to the active site in subunit 1, a binuclear center (BNC) formed by heme A3 and copper B (CU(B)). The BNC reduces molecular oxygen to 2 water molecules using 4 electrons from cytochrome c in the IMS and 4 protons from the mitochondrial matrix. The polypeptide is Cytochrome c oxidase subunit 2 (MT-CO2) (Propithecus tattersalli (Golden-crowned Sifaka)).